Consider the following 559-residue polypeptide: MTKFVFVTGGVVSSLGKGIASASLAAILESRGLKVTLIKLDPYINVDPGTMSPFQHGEVFVTDDGAETDLDLGHYERFITTRMRKANNFTTGQIYKTVLEKERRGDYLGKTVQVIPHITNEIQEYIKRGAGLGTAHEVDVAIVEIGGTVGDIESLPFLEAVRQMSLRMGPNNSAFVHLSYVPWIAAAGELKTKPTQHTAKELRAIGIQADALLCRADRPIPDDERAKISLFSNVPEWGVISMWDVDTIYKVPRMLHEQGLDGLICDKLRINTPPAKLQRWDELVYEVEHPQQEVSIAMVGKYVDLSDSYKSLNEALRHAGMKNHARVKIDYIDSETISPQDVSRLAKYDAILVPGGFGQRGVEGKISAARFAREGKVPYLGICLGMQVATIEYARHVAGLKNANSTEFDPETPCPVIALITEWKDADGTVKTRNEKSDLGGTMRLGAQSSDVSAGTLAHSIYGDVVTERHRHRYEANVNYLDELRAAGLVISALTQREHLTEIVELPQDVHPWFMGVQFHPEFKSTPWSGHPLFNAFIKAALDHKARSAGGAKNLKAVA.

Residues 1-270 (MTKFVFVTGG…DGLICDKLRI (270 aa)) are amidoligase domain. A CTP-binding site is contributed by Ser13. UTP is bound at residue Ser13. Residues 14-19 (SLGKGI) and Asp71 contribute to the ATP site. Asp71 and Glu144 together coordinate Mg(2+). CTP is bound by residues 151–153 (DIE), 191–196 (KTKPTQ), and Lys227. UTP is bound by residues 191–196 (KTKPTQ) and Lys227. The Glutamine amidotransferase type-1 domain maps to 295 to 547 (SIAMVGKYVD…IKAALDHKAR (253 aa)). L-glutamine is bound at residue Gly356. Cys383 (nucleophile; for glutamine hydrolysis) is an active-site residue. L-glutamine-binding positions include 384–387 (LGMQ), Glu407, and Arg473. Active-site residues include His520 and Glu522.

This sequence belongs to the CTP synthase family. As to quaternary structure, homotetramer.

The enzyme catalyses UTP + L-glutamine + ATP + H2O = CTP + L-glutamate + ADP + phosphate + 2 H(+). It carries out the reaction L-glutamine + H2O = L-glutamate + NH4(+). The catalysed reaction is UTP + NH4(+) + ATP = CTP + ADP + phosphate + 2 H(+). The protein operates within pyrimidine metabolism; CTP biosynthesis via de novo pathway; CTP from UDP: step 2/2. With respect to regulation, allosterically activated by GTP, when glutamine is the substrate; GTP has no effect on the reaction when ammonia is the substrate. The allosteric effector GTP functions by stabilizing the protein conformation that binds the tetrahedral intermediate(s) formed during glutamine hydrolysis. Inhibited by the product CTP, via allosteric rather than competitive inhibition. Its function is as follows. Catalyzes the ATP-dependent amination of UTP to CTP with either L-glutamine or ammonia as the source of nitrogen. Regulates intracellular CTP levels through interactions with the four ribonucleotide triphosphates. The polypeptide is CTP synthase (Variovorax paradoxus (strain S110)).